The chain runs to 232 residues: uncharacterized protein (232 aa).

Residues 209–229 form a helical membrane-spanning segment; sequence ATISTPALGYAYFLFTLTLVF.

Its subcellular location is the host membrane. This is an uncharacterized protein from Saccharolobus islandicus (Sulfolobus islandicus).